The primary structure comprises 52 residues: Rubredoxin-2 (52 aa).

The 52-residue stretch at 1–52 (MEQWKCNICGYIYNPETGDPEGDIPAGTSFESLPDSWMCPVCGAGKEEFTKI) folds into the Rubredoxin-like domain. Residues Cys6, Cys9, Cys39, and Cys42 each coordinate Fe cation.

Belongs to the rubredoxin family. In terms of assembly, monomer. The cofactor is Fe(3+).

Functionally, serves as an electron acceptor for pyruvate ferredoxin oxidoreductase (PFOR). In Chlorobaculum tepidum (strain ATCC 49652 / DSM 12025 / NBRC 103806 / TLS) (Chlorobium tepidum), this protein is Rubredoxin-2 (rub2).